A 252-amino-acid polypeptide reads, in one-letter code: 5'-nucleotidase SurE (252 aa).

A divalent metal cation-binding residues include Asp-8, Asp-9, Ser-39, and Asn-95.

This sequence belongs to the SurE nucleotidase family. Requires a divalent metal cation as cofactor.

The protein resides in the cytoplasm. The catalysed reaction is a ribonucleoside 5'-phosphate + H2O = a ribonucleoside + phosphate. Functionally, nucleotidase that shows phosphatase activity on nucleoside 5'-monophosphates. This is 5'-nucleotidase SurE from Clostridium botulinum (strain 657 / Type Ba4).